The primary structure comprises 152 residues: CMT1A duplicated region transcript 4 protein (152 aa).

Residues 1 to 11 show a composition bias toward basic and acidic residues; sequence MDARRMKKEEG. 2 disordered regions span residues 1-23 and 60-89; these read MDARRMKKEEGLTENTGLPRKLL and ERPWASRQNKPSSVIQPKRRKSSKSSGKAV. A compositionally biased stretch (polar residues) spans 65 to 74; it reads SRQNKPSSVI.

As to expression, expressed in fetal skeletal muscle and kidney.

This is CMT1A duplicated region transcript 4 protein (CDRT4) from Homo sapiens (Human).